A 207-amino-acid polypeptide reads, in one-letter code: ATP phosphoribosyltransferase (207 aa).

Belongs to the ATP phosphoribosyltransferase family. Short subfamily. In terms of assembly, heteromultimer composed of HisG and HisZ subunits.

The protein localises to the cytoplasm. It carries out the reaction 1-(5-phospho-beta-D-ribosyl)-ATP + diphosphate = 5-phospho-alpha-D-ribose 1-diphosphate + ATP. It participates in amino-acid biosynthesis; L-histidine biosynthesis; L-histidine from 5-phospho-alpha-D-ribose 1-diphosphate: step 1/9. Functionally, catalyzes the condensation of ATP and 5-phosphoribose 1-diphosphate to form N'-(5'-phosphoribosyl)-ATP (PR-ATP). Has a crucial role in the pathway because the rate of histidine biosynthesis seems to be controlled primarily by regulation of HisG enzymatic activity. The polypeptide is ATP phosphoribosyltransferase (Geobacillus kaustophilus (strain HTA426)).